The chain runs to 246 residues: Small ribosomal subunit protein uS3A (246 aa).

In terms of domain architecture, KH type-2 spans 21–92 (LNEFLTRELA…SVELYAEKVA (72 aa)). Residues 215 to 246 (DEIVPTTPISEQKAAKPDQPQPPAMPQPVATA) form a disordered region.

It belongs to the universal ribosomal protein uS3 family.

Its subcellular location is the cytoplasm. The protein localises to the nucleus. It localises to the nucleolus. It is found in the mitochondrion inner membrane. The protein resides in the cytoskeleton. Its subcellular location is the spindle. It catalyses the reaction 2'-deoxyribonucleotide-(2'-deoxyribose 5'-phosphate)-2'-deoxyribonucleotide-DNA = a 3'-end 2'-deoxyribonucleotide-(2,3-dehydro-2,3-deoxyribose 5'-phosphate)-DNA + a 5'-end 5'-phospho-2'-deoxyribonucleoside-DNA + H(+). Functionally, component of the small ribosomal subunit. The ribosome is a large ribonucleoprotein complex responsible for the synthesis of proteins in the cell. Has endonuclease activity and plays a role in repair of damaged DNA. Also involved in other processes including regulation of transcription, translation of its cognate mRNA, spindle formation and chromosome movement during mitosis, and apoptosis. The chain is Small ribosomal subunit protein uS3A (rps3-a) from Xenopus laevis (African clawed frog).